A 335-amino-acid chain; its full sequence is MIEADRLVSAEVLQDDEAIDRAIRPKLLSEYVGQPQVCEQMEIFIQAARQRGDALDHLLIFGPPGLGKTTLANIVANEMGVNLRTTSGPVLEKAGDLAAMLTNLEPHDVLFIDEIHRLSPVVEEILYPAMEDYQLDIMIGEGPAARSIKIDLPPFTLIGATTRAGSLTSPLRDRFGIVQRLEFYNVDDLQSIVSRSARFMGVEITDDGARQVAMRSRGTPRITNRLLRRVRDFAQVKGNGAIDGNIATRALDMLSVDAAGFDYLDRKLLIAIIDKFMGGPVGVDNLAAAIGEERETIEDVLEPFLIQQGFIQRTSRGRIATEHAYRHFGMVRNQE.

The segment at 4–184 is large ATPase domain (RuvB-L); the sequence is ADRLVSAEVL…FGIVQRLEFY (181 aa). Residues isoleucine 23, arginine 24, glycine 65, lysine 68, threonine 69, threonine 70, 131 to 133, arginine 174, tyrosine 184, and arginine 221 contribute to the ATP site; that span reads EDY. Threonine 69 serves as a coordination point for Mg(2+). Residues 185–255 are small ATPAse domain (RuvB-S); it reads NVDDLQSIVS…IATRALDMLS (71 aa). The interval 258–335 is head domain (RuvB-H); sequence AAGFDYLDRK…RHFGMVRNQE (78 aa). Residues arginine 294, arginine 313, and arginine 318 each contribute to the DNA site.

This sequence belongs to the RuvB family. Homohexamer. Forms an RuvA(8)-RuvB(12)-Holliday junction (HJ) complex. HJ DNA is sandwiched between 2 RuvA tetramers; dsDNA enters through RuvA and exits via RuvB. An RuvB hexamer assembles on each DNA strand where it exits the tetramer. Each RuvB hexamer is contacted by two RuvA subunits (via domain III) on 2 adjacent RuvB subunits; this complex drives branch migration. In the full resolvosome a probable DNA-RuvA(4)-RuvB(12)-RuvC(2) complex forms which resolves the HJ.

The protein localises to the cytoplasm. It catalyses the reaction ATP + H2O = ADP + phosphate + H(+). Its function is as follows. The RuvA-RuvB-RuvC complex processes Holliday junction (HJ) DNA during genetic recombination and DNA repair, while the RuvA-RuvB complex plays an important role in the rescue of blocked DNA replication forks via replication fork reversal (RFR). RuvA specifically binds to HJ cruciform DNA, conferring on it an open structure. The RuvB hexamer acts as an ATP-dependent pump, pulling dsDNA into and through the RuvAB complex. RuvB forms 2 homohexamers on either side of HJ DNA bound by 1 or 2 RuvA tetramers; 4 subunits per hexamer contact DNA at a time. Coordinated motions by a converter formed by DNA-disengaged RuvB subunits stimulates ATP hydrolysis and nucleotide exchange. Immobilization of the converter enables RuvB to convert the ATP-contained energy into a lever motion, pulling 2 nucleotides of DNA out of the RuvA tetramer per ATP hydrolyzed, thus driving DNA branch migration. The RuvB motors rotate together with the DNA substrate, which together with the progressing nucleotide cycle form the mechanistic basis for DNA recombination by continuous HJ branch migration. Branch migration allows RuvC to scan DNA until it finds its consensus sequence, where it cleaves and resolves cruciform DNA. This Photorhabdus laumondii subsp. laumondii (strain DSM 15139 / CIP 105565 / TT01) (Photorhabdus luminescens subsp. laumondii) protein is Holliday junction branch migration complex subunit RuvB.